A 239-amino-acid chain; its full sequence is Tumor necrosis factor ligand superfamily member 14 (239 aa).

At 1–37 the chain is on the cytoplasmic side; the sequence is MESVVQPSVFVVDGQTDIPFRRLEQNHRRRRCGTVQV. Residues 38 to 58 traverse the membrane as a helical; Signal-anchor for type II membrane protein segment; that stretch reads SLALVLLLGAGLATQGWFLLR. The Extracellular portion of the chain corresponds to 59 to 239; sequence LHQRLGDIVA…TRSYFGAFMV (181 aa). Positions 92 to 239 constitute a THD domain; that stretch reads PAAHLTGANA…TRSYFGAFMV (148 aa). N-linked (GlcNAc...) asparagine glycosylation occurs at asparagine 100. Cysteine 152 and cysteine 187 are joined by a disulfide. Asparagine 191 carries an N-linked (GlcNAc...) asparagine glycan.

It belongs to the tumor necrosis factor family. As to quaternary structure, homotrimer. Interacts with TNFRSF14. The soluble form derives from the membrane form by proteolytic processing.

It localises to the cell membrane. Its subcellular location is the secreted. In terms of biological role, cytokine that binds to TNFRSF3/LTBR. Binding to the decoy receptor TNFRSF6B modulates its effects. Activates NFKB and stimulates the proliferation of T-cells. Acts as a ligand for TNFRSF14/HVEM. Upon binding to TNFRSF14/HVEM, delivers costimulatory signals to T cells, leading to T cell proliferation and IFNG production. The polypeptide is Tumor necrosis factor ligand superfamily member 14 (Tnfsf14) (Mus musculus (Mouse)).